A 372-amino-acid polypeptide reads, in one-letter code: DNA-directed RNA polymerase subunit alpha (372 aa).

The tract at residues 1 to 268 is alpha N-terminal domain (alpha-NTD); the sequence is MIFDEDSNSV…DQFQPFINFD (268 aa). The alpha C-terminal domain (alpha-CTD) stretch occupies residues 280–372; that stretch reads KDALPYDSNL…ESLSKQYSEE (93 aa).

Belongs to the RNA polymerase alpha chain family. As to quaternary structure, homodimer. The RNAP catalytic core consists of 2 alpha, 1 beta, 1 beta' and 1 omega subunit. When a sigma factor is associated with the core the holoenzyme is formed, which can initiate transcription.

It catalyses the reaction RNA(n) + a ribonucleoside 5'-triphosphate = RNA(n+1) + diphosphate. Functionally, DNA-dependent RNA polymerase catalyzes the transcription of DNA into RNA using the four ribonucleoside triphosphates as substrates. The protein is DNA-directed RNA polymerase subunit alpha of Ehrlichia canis (strain Jake).